The primary structure comprises 69 residues: Cell division protein CrgA (69 aa).

A run of 2 helical transmembrane segments spans residues 14 to 34 and 45 to 65; these read VWFP…MVLF and AVGT…FAMM.

Belongs to the CrgA family.

The protein resides in the cell membrane. Its function is as follows. Involved in cell division. The sequence is that of Cell division protein CrgA from Tropheryma whipplei (strain TW08/27) (Whipple's bacillus).